A 430-amino-acid polypeptide reads, in one-letter code: Signal recognition particle receptor FtsY (430 aa).

The segment at 75 to 95 is disordered; the sequence is DTGELPAVGDDATVPRDSPRH. GTP is bound by residues 238–245, 320–324, and 382–385; these read GVNGTGKT, DTAGR, and TKLD.

This sequence belongs to the GTP-binding SRP family. FtsY subfamily. As to quaternary structure, part of the signal recognition particle protein translocation system, which is composed of SRP and FtsY.

Its subcellular location is the cell membrane. It localises to the cytoplasm. It carries out the reaction GTP + H2O = GDP + phosphate + H(+). Its function is as follows. Involved in targeting and insertion of nascent membrane proteins into the cytoplasmic membrane. Acts as a receptor for the complex formed by the signal recognition particle (SRP) and the ribosome-nascent chain (RNC). The sequence is that of Signal recognition particle receptor FtsY from Mycobacterium leprae (strain TN).